The primary structure comprises 316 residues: Glycine--tRNA ligase alpha subunit (316 aa).

This sequence belongs to the class-II aminoacyl-tRNA synthetase family. As to quaternary structure, tetramer of two alpha and two beta subunits.

The protein localises to the cytoplasm. The catalysed reaction is tRNA(Gly) + glycine + ATP = glycyl-tRNA(Gly) + AMP + diphosphate. The protein is Glycine--tRNA ligase alpha subunit of Paracoccus denitrificans (strain Pd 1222).